The sequence spans 234 residues: Cytochrome b (234 aa).

The next 4 membrane-spanning stretches (helical) occupy residues 33–53, 77–98, 113–133, and 178–198; these read FGSL…FLAM, WLIR…YMHV, WNIG…GYVL, and FFAF…IHLL. Residues H83 and H97 each contribute to the heme b site. Heme b contacts are provided by H182 and H196. H201 is a binding site for a ubiquinone. Residues 226–234 traverse the membrane as a helical segment; that stretch reads IKDVLGFLM.

Belongs to the cytochrome b family. In terms of assembly, the cytochrome bc1 complex contains 11 subunits: 3 respiratory subunits (MT-CYB, CYC1 and UQCRFS1), 2 core proteins (UQCRC1 and UQCRC2) and 6 low-molecular weight proteins (UQCRH/QCR6, UQCRB/QCR7, UQCRQ/QCR8, UQCR10/QCR9, UQCR11/QCR10 and a cleavage product of UQCRFS1). This cytochrome bc1 complex then forms a dimer. Requires heme b as cofactor.

The protein localises to the mitochondrion inner membrane. In terms of biological role, component of the ubiquinol-cytochrome c reductase complex (complex III or cytochrome b-c1 complex) that is part of the mitochondrial respiratory chain. The b-c1 complex mediates electron transfer from ubiquinol to cytochrome c. Contributes to the generation of a proton gradient across the mitochondrial membrane that is then used for ATP synthesis. The sequence is that of Cytochrome b (MT-CYB) from Lepus alleni (Antelope jackrabbit).